A 136-amino-acid polypeptide reads, in one-letter code: Nucleoside diphosphate kinase (136 aa).

ATP contacts are provided by K10, F58, R86, T92, R104, and N114. The Pros-phosphohistidine intermediate role is filled by H117.

Belongs to the NDK family. As to quaternary structure, homotetramer. The cofactor is Mg(2+).

Its subcellular location is the cytoplasm. The catalysed reaction is a 2'-deoxyribonucleoside 5'-diphosphate + ATP = a 2'-deoxyribonucleoside 5'-triphosphate + ADP. It catalyses the reaction a ribonucleoside 5'-diphosphate + ATP = a ribonucleoside 5'-triphosphate + ADP. Major role in the synthesis of nucleoside triphosphates other than ATP. The ATP gamma phosphate is transferred to the NDP beta phosphate via a ping-pong mechanism, using a phosphorylated active-site intermediate. The polypeptide is Nucleoside diphosphate kinase (Mycolicibacterium gilvum (strain PYR-GCK) (Mycobacterium gilvum (strain PYR-GCK))).